The sequence spans 829 residues: Periplasmic nitrate reductase (829 aa).

A signal peptide (tat-type signal) is located at residues 1–27 (MNRRDFMKANAVIAAASAAGLALPAGA). One can recognise a 4Fe-4S Mo/W bis-MGD-type domain in the interval 39 to 95 (LEWNKAPCRFCGTGCSVMVATREGKVVATHGDANSEVNRGLSCIKGYFLSKIMYGRD). [4Fe-4S] cluster contacts are provided by C46, C49, C53, and C81. Mo-bis(molybdopterin guanine dinucleotide) contacts are provided by residues K83, Q150, N175, C179, 212–219 (WGSNMAEM), 243–247 (STFEH), 262–264 (QTD), M373, Q377, N483, 509–510 (SD), K532, D559, and 719–728 (TGRVLEHWHS). W795 lines the substrate pocket. Residues N803 and K820 each contribute to the Mo-bis(molybdopterin guanine dinucleotide) site.

Belongs to the prokaryotic molybdopterin-containing oxidoreductase family. NasA/NapA/NarB subfamily. In terms of assembly, component of the periplasmic nitrate reductase NapAB complex composed of NapA and NapB. [4Fe-4S] cluster serves as cofactor. The cofactor is Mo-bis(molybdopterin guanine dinucleotide). In terms of processing, predicted to be exported by the Tat system. The position of the signal peptide cleavage has not been experimentally proven.

It is found in the periplasm. It catalyses the reaction 2 Fe(II)-[cytochrome] + nitrate + 2 H(+) = 2 Fe(III)-[cytochrome] + nitrite + H2O. Its function is as follows. Catalytic subunit of the periplasmic nitrate reductase complex NapAB. Receives electrons from NapB and catalyzes the reduction of nitrate to nitrite. The protein is Periplasmic nitrate reductase of Shewanella denitrificans (strain OS217 / ATCC BAA-1090 / DSM 15013).